The primary structure comprises 233 residues: 5'-methylthioadenosine/S-adenosylhomocysteine nucleosidase (233 aa).

Glutamate 12 serves as the catalytic Proton acceptor. Residues glycine 78, isoleucine 156, and methionine 177–glutamate 178 contribute to the substrate site. The active-site Proton donor is aspartate 201.

It belongs to the PNP/UDP phosphorylase family. MtnN subfamily.

The enzyme catalyses S-adenosyl-L-homocysteine + H2O = S-(5-deoxy-D-ribos-5-yl)-L-homocysteine + adenine. The catalysed reaction is S-methyl-5'-thioadenosine + H2O = 5-(methylsulfanyl)-D-ribose + adenine. It catalyses the reaction 5'-deoxyadenosine + H2O = 5-deoxy-D-ribose + adenine. It functions in the pathway amino-acid biosynthesis; L-methionine biosynthesis via salvage pathway; S-methyl-5-thio-alpha-D-ribose 1-phosphate from S-methyl-5'-thioadenosine (hydrolase route): step 1/2. Catalyzes the irreversible cleavage of the glycosidic bond in both 5'-methylthioadenosine (MTA) and S-adenosylhomocysteine (SAH/AdoHcy) to adenine and the corresponding thioribose, 5'-methylthioribose and S-ribosylhomocysteine, respectively. Also cleaves 5'-deoxyadenosine, a toxic by-product of radical S-adenosylmethionine (SAM) enzymes, into 5-deoxyribose and adenine. The sequence is that of 5'-methylthioadenosine/S-adenosylhomocysteine nucleosidase from Listeria monocytogenes serotype 4a (strain HCC23).